Consider the following 563-residue polypeptide: BOS complex subunit NCLN (563 aa).

The signal sequence occupies residues 1–42 (MLEEAGEVLENVLKASCLPLGFIVFLPAVLLLVAPPLPAADA). Topologically, residues 43–522 (AHEFTVYRMQ…VMNAYRVKPA (480 aa)) are lumenal. 2 N-linked (GlcNAc...) asparagine glycosylation sites follow: N241 and N428. A helical transmembrane segment spans residues 523 to 543 (IFDLLLALCIGAYLGMAYTAV). Over 544-563 (QHFHVLYKTVQRLLLKAKAQ) the chain is Cytoplasmic.

This sequence belongs to the nicastrin family. Component of the back of Sec61 (BOS) complex, composed of NCLN/Nicalin, NOMO1 and TMEM147. The BOS complex is part of the multi-pass translocon (MPT) complex, composed of three subcomplexes, the GEL complex (composed of RAB5IF/OPTI and TMCO1), the BOS complex (composed of NCLN/Nicalin, NOMO1 and TMEM147) and the PAT complex (composed of WDR83OS/Asterix and CCDC47). The MPT complex associates with the SEC61 complex.

The protein localises to the endoplasmic reticulum membrane. Functionally, component of the multi-pass translocon (MPT) complex that mediates insertion of multi-pass membrane proteins into the lipid bilayer of membranes. The MPT complex takes over after the SEC61 complex: following membrane insertion of the first few transmembrane segments of proteins by the SEC61 complex, the MPT complex occludes the lateral gate of the SEC61 complex to promote insertion of subsequent transmembrane regions. May antagonize Nodal signaling and subsequent organization of axial structures during mesodermal patterning, via its interaction with NOMO. This is BOS complex subunit NCLN (Ncln) from Mus musculus (Mouse).